Reading from the N-terminus, the 324-residue chain is HTH-type transcriptional regulator GlxA (324 aa).

Positions 223 to 321 (LAVLEKMETA…SQTPGSLRRR (99 aa)) constitute an HTH araC/xylS-type domain. 2 DNA-binding regions (H-T-H motif) span residues 240-261 (TAMA…REHR) and 288-311 (IPEI…KRLF).

The chain is HTH-type transcriptional regulator GlxA (glxA) from Rhizobium meliloti (strain 1021) (Ensifer meliloti).